The primary structure comprises 1169 residues: Protein MBD-R2 (1169 aa).

The segment at 5–59 (CCVANCPSTSRLLEHNGVTYHSFPLDPIIRAIWIKNSRISLERQITKSVLVCSRH) adopts a THAP-type zinc-finger fold. Disordered stretches follow at residues 99-122 (RALQ…STND), 140-211 (SAER…KYSN), and 347-394 (AEEG…CAPQ). Positions 107-122 (EGTTETPGNAQSSTND) are enriched in polar residues. Residues 140–160 (SAERKATEEGKTGKAADDVKN) are compositionally biased toward basic and acidic residues. A compositionally biased stretch (low complexity) spans 190-202 (PAPGSASSSNSPL). The span at 353–363 (KSPTPVGTPVS) shows a compositional bias: polar residues. The MBD domain maps to 445-514 (KPTVIVQDWR…DVYDFSIHRR (70 aa)). A disordered region spans residues 527–565 (GYNPQPPPKPRPMDVSMNSTLDQSITSQHSLPSTPMPVK). Polar residues predominate over residues 542 to 559 (SMNSTLDQSITSQHSLPS). The segment at 640–665 (YVCPREDCAKTYRKEDFLLIHIRHYH) adopts a C2H2-type zinc-finger fold. Residues 714–890 (QDLQQSRSFK…INAALAPPPA (177 aa)) are disordered. Residues 726–742 (SVSATATSSTPSDITPT) show a composition bias toward low complexity. Residues 774 to 784 (PTQSFNPSLSR) show a composition bias toward polar residues. The span at 798-810 (SGSRKSNRQRSQR) shows a compositional bias: basic residues. 2 stretches are compositionally biased toward polar residues: residues 853–862 (AATTPISSID) and 869–881 (SVST…QTDI).

Component of the non-specific lethal (NLS) histone acetyltransferase complex at least composed of mof, nls1, dgt1/NSL2, Rcd1/NSL3, Rcd5/MCRS2, MBD-R2 and wds.

Its subcellular location is the nucleus. The protein localises to the chromosome. In terms of biological role, component of the non-specific lethal (NLS) complex, a multiprotein complex that promotes expression of housekeeping genes on X chromosome and autosomes. The polypeptide is Protein MBD-R2 (Drosophila melanogaster (Fruit fly)).